The primary structure comprises 250 residues: MFRATCNTRDFKKVINATSNLVDEICFEVDENGIKASAMDPSHVALVSMEMPKDVFEEYEGDIQDIGIDLEALKKIIARGRGDEKLILDLDVEKNKLNITFKSNVTRKFSIALYDVSSSNLKVPDIEYPNSVSIKAGAFVEALKDAELVNDHITLKIDENKFVIYSKGDLNQSETVFDNSIDDDDNALADFNMGEASRSTFNLAYLKDLTKSTAAEDLLKIYLGSDMPVKIEYEVSGSKLVFLLAPRIES.

Belongs to the PCNA family. As to quaternary structure, homotrimer. The subunits circularize to form a toroid; DNA passes through its center. Replication factor C (RFC) is required to load the toroid on the DNA.

Sliding clamp subunit that acts as a moving platform for DNA processing. Responsible for tethering the catalytic subunit of DNA polymerase and other proteins to DNA during high-speed replication. The polypeptide is DNA polymerase sliding clamp (Methanococcus maripaludis (strain DSM 14266 / JCM 13030 / NBRC 101832 / S2 / LL)).